Reading from the N-terminus, the 77-residue chain is Putative antitoxin VapB3 (77 aa).

The protein belongs to the UPF0330 family.

Functionally, possibly the antitoxin component of a type II toxin-antitoxin (TA) system. Its cognate toxin is VapC3 (Potential). This chain is Putative antitoxin VapB3 (vapB3), found in Methanocaldococcus jannaschii (strain ATCC 43067 / DSM 2661 / JAL-1 / JCM 10045 / NBRC 100440) (Methanococcus jannaschii).